A 327-amino-acid polypeptide reads, in one-letter code: Zinc transport protein ZntB (327 aa).

Residues 1–273 are Cytoplasmic-facing; that stretch reads MEAIKGSDVN…ARRTYTMSLM (273 aa). Residues 274–294 traverse the membrane as a helical segment; sequence AMVFLPSTFLTGLFGVNLGGI. Over 295–300 the chain is Periplasmic; it reads PGGGWR. The helical transmembrane segment at 301 to 321 threads the bilayer; the sequence is FGFSLFCILLVVLIGGVTLWL. Residues 322-327 are Cytoplasmic-facing; the sequence is HRSKWL.

Belongs to the CorA metal ion transporter (MIT) (TC 1.A.35) family.

It is found in the cell inner membrane. The enzyme catalyses Zn(2+)(out) + H(+)(out) = Zn(2+)(in) + H(+)(in). Its function is as follows. Zinc transporter. Acts as a Zn(2+):proton symporter, which likely mediates zinc ion uptake. This is Zinc transport protein ZntB from Salmonella choleraesuis (strain SC-B67).